The following is a 428-amino-acid chain: Glucose-1-phosphate adenylyltransferase (428 aa).

Alpha-D-glucose 1-phosphate-binding positions include tyrosine 99, glycine 164, 179–180 (EK), and serine 190.

This sequence belongs to the bacterial/plant glucose-1-phosphate adenylyltransferase family. As to quaternary structure, homotetramer.

The enzyme catalyses alpha-D-glucose 1-phosphate + ATP + H(+) = ADP-alpha-D-glucose + diphosphate. Its pathway is glycan biosynthesis; glycogen biosynthesis. Functionally, involved in the biosynthesis of ADP-glucose, a building block required for the elongation reactions to produce glycogen. Catalyzes the reaction between ATP and alpha-D-glucose 1-phosphate (G1P) to produce pyrophosphate and ADP-Glc. The sequence is that of Glucose-1-phosphate adenylyltransferase from Thermomicrobium roseum (strain ATCC 27502 / DSM 5159 / P-2).